The chain runs to 243 residues: Phosphate-specific transport system accessory protein PhoU (243 aa).

It belongs to the PhoU family. Homodimer.

The protein localises to the cytoplasm. In terms of biological role, part of the phosphate (Pho) regulon, which plays a key role in phosphate homeostasis. Encoded together with proteins of the phosphate-specific transport (Pst) system in the polycistronic pstSCAB-phoU operon. PhoU is essential for the repression of the Pho regulon at high phosphate conditions. In this role, it may bind, possibly as a chaperone, to PhoR, PhoB or a PhoR-PhoB complex to promote dephosphorylation of phospho-PhoB, or inhibit formation of the PhoR-PhoB transitory complex. The chain is Phosphate-specific transport system accessory protein PhoU from Serratia marcescens.